The primary structure comprises 237 residues: Glutathione-independent glyoxalase HSP31 (237 aa).

Catalysis depends on residues C138, H139, and E170. C138 is modified (cysteine sulfinic acid (-SO2H)).

This sequence belongs to the peptidase C56 family. HSP31-like subfamily. Homodimer. Cys-138 is easily oxidized to sulfinic acid.

It is found in the cytoplasm. The protein localises to the P-body. The catalysed reaction is methylglyoxal + H2O = (R)-lactate + H(+). In terms of biological role, catalyzes the conversion of methylglyoxal (MG) to D-lactate in a single glutathione (GSH)-independent step. May play a role in detoxifying endogenously produced glyoxals. Involved in protection against reactive oxygen species (ROS). Important for viability in stationary phase. May negatively regulate TORC1 in response to nutrient limitation. The protein is Glutathione-independent glyoxalase HSP31 of Saccharomyces cerevisiae (strain ATCC 204508 / S288c) (Baker's yeast).